We begin with the raw amino-acid sequence, 82 residues long: Kappa-actitoxin-Avd4j (82 aa).

The signal sequence occupies residues 1–19; the sequence is MNKALFLCLVVLCAAVVFA. Positions 20 to 31 are excised as a propeptide; that stretch reads AEDLQKAKHAPF. 3 disulfide bridges follow: C38–C73, C40–C66, and C56–C74.

This sequence belongs to the sea anemone type 3 (BDS) potassium channel toxin family. In terms of tissue distribution, weakly expressed in the ectodermal tissue from the distal and proximal tentacles, body wall, and oral disk.

Its subcellular location is the secreted. The protein localises to the nematocyst. Blocks Kv3 voltage-gated potassium channels. Reduces blood pressure. This is Kappa-actitoxin-Avd4j from Anemonia viridis (Snakelocks anemone).